A 94-amino-acid chain; its full sequence is Putative regulatory protein LEPBI_I0950 (94 aa).

This sequence belongs to the RemA family.

This Leptospira biflexa serovar Patoc (strain Patoc 1 / ATCC 23582 / Paris) protein is Putative regulatory protein LEPBI_I0950.